We begin with the raw amino-acid sequence, 215 residues long: Ependymin (215 aa).

The first 20 residues, 1 to 20 (MHTVKLLCVVFSCLCAVAWA), serve as a signal peptide directing secretion. 2 N-linked (GlcNAc...) asparagine glycosylation sites follow: asparagine 71 and asparagine 94.

This sequence belongs to the ependymin family. In terms of assembly, forms disulfide-linked dimers. Post-translationally, binds calcium through the terminal sialic acids. As to expression, EPDs are synthesized in the meninx and secreted in the cerebrospinal fluid.

Its subcellular location is the secreted. Functionally, may play a role in neural plasticity. May be involved during axon regeneration. This is Ependymin (epd) from Cyprinus carpio (Common carp).